The following is a 168-amino-acid chain: Ubiquitin-conjugating enzyme E2 7 (168 aa).

Positions 1-21 (MATAPARRASSSRSSSEISRT) are disordered. The UBC core domain maps to 6-166 (ARRASSSRSS…VRRAVRKSQE (161 aa)). Catalysis depends on C92, which acts as the Glycyl thioester intermediate.

The protein belongs to the ubiquitin-conjugating enzyme family.

It catalyses the reaction S-ubiquitinyl-[E1 ubiquitin-activating enzyme]-L-cysteine + [E2 ubiquitin-conjugating enzyme]-L-cysteine = [E1 ubiquitin-activating enzyme]-L-cysteine + S-ubiquitinyl-[E2 ubiquitin-conjugating enzyme]-L-cysteine.. The protein operates within protein modification; protein ubiquitination. Its function is as follows. Catalyzes the covalent attachment of ubiquitin to other proteins so as to signal them for selective protein degradation. Involved in the formation of multiubiquitin chains. The protein is Ubiquitin-conjugating enzyme E2 7 (UBC7) of Triticum aestivum (Wheat).